The sequence spans 462 residues: MSNQHNQEKLSSARFSEATDAFVEEFTASIQFDKRMYRQDIQGSVAHAKMLHKVGILDKQELKDIIDGLEKVQSDIEAGKMNWSIKQEDIHMNIEAKLTELIGITGKKLHTGRSRNDQVATDIRLYLRDEIDAILPEMARLQHGILLLAEKEAETIMPGFTHLQTAQPVTFGHHMMAWFEMIKRDVERLEDCRKRVNTMPLGSAALAGTTYPIQREYTAELLQFDRISENSLDGVSDRDFAIEFTAFAATFLMHLSRFSEELVLWSSAQFNFIDLPDRFCTGSSIMPQKKNPDVPELVRGKTGRVYGHLMSLLTLMKSQPLAYNKDNQEDKEPLFDTVDTVKGSLRAFADMVPAIIVNREATYAAAKQGFSTATDLADYLVNKGLPFRDAHEVVGLAVAHGIQTGQDLSEMPLETLQAFHSSITDDVFEVLTLEGSVSARDHLGGTAPKQVKAAIKRAKDRL.

The protein belongs to the lyase 1 family. Argininosuccinate lyase subfamily.

The protein localises to the cytoplasm. It carries out the reaction 2-(N(omega)-L-arginino)succinate = fumarate + L-arginine. It functions in the pathway amino-acid biosynthesis; L-arginine biosynthesis; L-arginine from L-ornithine and carbamoyl phosphate: step 3/3. The polypeptide is Argininosuccinate lyase (Hydrogenovibrio crunogenus (strain DSM 25203 / XCL-2) (Thiomicrospira crunogena)).